The primary structure comprises 485 residues: Cysteine--tRNA ligase (485 aa).

Cys29 contacts Zn(2+). The 'HIGH' region motif lies at 31 to 41 (ATVQGMPHVGH). The interval 174–198 (QRVEDMQDAPDADPRGKRDPHDFAL) is disordered. Basic and acidic residues predominate over residues 185–197 (ADPRGKRDPHDFA). Cys227, His252, and Glu256 together coordinate Zn(2+). Residues 283-287 (KMSKS) carry the 'KMSKS' region motif. Lys286 lines the ATP pocket.

The protein belongs to the class-I aminoacyl-tRNA synthetase family. As to quaternary structure, monomer. It depends on Zn(2+) as a cofactor.

Its subcellular location is the cytoplasm. It catalyses the reaction tRNA(Cys) + L-cysteine + ATP = L-cysteinyl-tRNA(Cys) + AMP + diphosphate. This Micrococcus luteus (strain ATCC 4698 / DSM 20030 / JCM 1464 / CCM 169 / CCUG 5858 / IAM 1056 / NBRC 3333 / NCIMB 9278 / NCTC 2665 / VKM Ac-2230) (Micrococcus lysodeikticus) protein is Cysteine--tRNA ligase.